The primary structure comprises 38 residues: Antimicrobial peptide 1 (38 aa).

In terms of processing, disulfide bonds. As to expression, expressed in flowers but not in leaves, seeds or roots (at protein level).

In terms of biological role, antimicrobial peptide. Active against fungal species B.cinerea (IC(50)=5.8 uM) and A.niger (IC(50)=5.6 uM) but not against F.oxysporum, F.graminearum, B.sorokinina and P.debaryanum at concentrations below 10 uM. Active against bacterial species P.syringae, B.subtilis and X.campestris. The polypeptide is Antimicrobial peptide 1 (Taraxacum officinale (Common dandelion)).